The following is a 62-amino-acid chain: Putative antitoxin AF_1095 (62 aa).

Belongs to the UPF0165 family.

Possibly the antitoxin component of a type II toxin-antitoxin (TA) system. The sequence is that of Putative antitoxin AF_1095 from Archaeoglobus fulgidus (strain ATCC 49558 / DSM 4304 / JCM 9628 / NBRC 100126 / VC-16).